A 360-amino-acid polypeptide reads, in one-letter code: Phosphoserine aminotransferase (360 aa).

Arginine 41 serves as a coordination point for L-glutamate. Residues tryptophan 101, threonine 152, aspartate 172, and glutamine 195 each contribute to the pyridoxal 5'-phosphate site. Position 196 is an N6-(pyridoxal phosphate)lysine (lysine 196). Asparagine 237–threonine 238 serves as a coordination point for pyridoxal 5'-phosphate.

Belongs to the class-V pyridoxal-phosphate-dependent aminotransferase family. SerC subfamily. As to quaternary structure, homodimer. Pyridoxal 5'-phosphate serves as cofactor.

The protein localises to the cytoplasm. It carries out the reaction O-phospho-L-serine + 2-oxoglutarate = 3-phosphooxypyruvate + L-glutamate. The enzyme catalyses 4-(phosphooxy)-L-threonine + 2-oxoglutarate = (R)-3-hydroxy-2-oxo-4-phosphooxybutanoate + L-glutamate. It functions in the pathway amino-acid biosynthesis; L-serine biosynthesis; L-serine from 3-phospho-D-glycerate: step 2/3. It participates in cofactor biosynthesis; pyridoxine 5'-phosphate biosynthesis; pyridoxine 5'-phosphate from D-erythrose 4-phosphate: step 3/5. Functionally, catalyzes the reversible conversion of 3-phosphohydroxypyruvate to phosphoserine and of 3-hydroxy-2-oxo-4-phosphonooxybutanoate to phosphohydroxythreonine. The sequence is that of Phosphoserine aminotransferase from Burkholderia cenocepacia (strain HI2424).